The following is a 572-amino-acid chain: Proline--tRNA ligase (572 aa).

It belongs to the class-II aminoacyl-tRNA synthetase family. ProS type 1 subfamily. As to quaternary structure, homodimer.

It localises to the cytoplasm. The enzyme catalyses tRNA(Pro) + L-proline + ATP = L-prolyl-tRNA(Pro) + AMP + diphosphate. Functionally, catalyzes the attachment of proline to tRNA(Pro) in a two-step reaction: proline is first activated by ATP to form Pro-AMP and then transferred to the acceptor end of tRNA(Pro). As ProRS can inadvertently accommodate and process non-cognate amino acids such as alanine and cysteine, to avoid such errors it has two additional distinct editing activities against alanine. One activity is designated as 'pretransfer' editing and involves the tRNA(Pro)-independent hydrolysis of activated Ala-AMP. The other activity is designated 'posttransfer' editing and involves deacylation of mischarged Ala-tRNA(Pro). The misacylated Cys-tRNA(Pro) is not edited by ProRS. The sequence is that of Proline--tRNA ligase from Bacillus licheniformis (strain ATCC 14580 / DSM 13 / JCM 2505 / CCUG 7422 / NBRC 12200 / NCIMB 9375 / NCTC 10341 / NRRL NRS-1264 / Gibson 46).